Here is a 194-residue protein sequence, read N- to C-terminus: MDVNNVELIISAVRPEQYPETDLPEYALAGRSNVGKSSFINTMIRRKSMARISQKPGKTQTLNFYKIEEALFFVDVPGYGFAKVSKTEREKWGVMIETYITSREQLRGVIQIVDLRHKPTEDDRMMYEFLKYYEIPVIVVATKADKIPRSKWQKNAKIVRETLDFDPDDKFVLFSSETKMGKDEAWQFIKEGME.

An EngB-type G domain is found at 22–194 (DLPEYALAGR…AWQFIKEGME (173 aa)). GTP contacts are provided by residues 30–37 (GRSNVGKS), 57–61 (GKTQT), 75–78 (DVPG), 142–145 (TKAD), and 174–176 (FSS). Mg(2+)-binding residues include serine 37 and threonine 59.

Belongs to the TRAFAC class TrmE-Era-EngA-EngB-Septin-like GTPase superfamily. EngB GTPase family. It depends on Mg(2+) as a cofactor.

Its function is as follows. Necessary for normal cell division and for the maintenance of normal septation. The protein is Probable GTP-binding protein EngB of Listeria welshimeri serovar 6b (strain ATCC 35897 / DSM 20650 / CCUG 15529 / CIP 8149 / NCTC 11857 / SLCC 5334 / V8).